Consider the following 256-residue polypeptide: Imidazole glycerol phosphate synthase subunit HisF (256 aa).

Catalysis depends on residues aspartate 11 and aspartate 130.

The protein belongs to the HisA/HisF family. Heterodimer of HisH and HisF.

It localises to the cytoplasm. The enzyme catalyses 5-[(5-phospho-1-deoxy-D-ribulos-1-ylimino)methylamino]-1-(5-phospho-beta-D-ribosyl)imidazole-4-carboxamide + L-glutamine = D-erythro-1-(imidazol-4-yl)glycerol 3-phosphate + 5-amino-1-(5-phospho-beta-D-ribosyl)imidazole-4-carboxamide + L-glutamate + H(+). The protein operates within amino-acid biosynthesis; L-histidine biosynthesis; L-histidine from 5-phospho-alpha-D-ribose 1-diphosphate: step 5/9. Functionally, IGPS catalyzes the conversion of PRFAR and glutamine to IGP, AICAR and glutamate. The HisF subunit catalyzes the cyclization activity that produces IGP and AICAR from PRFAR using the ammonia provided by the HisH subunit. This chain is Imidazole glycerol phosphate synthase subunit HisF, found in Thioalkalivibrio sulfidiphilus (strain HL-EbGR7).